The following is a 254-amino-acid chain: Low affinity immunoglobulin gamma Fc region receptor III-A (254 aa).

The first 16 residues, M1 to A16, serve as a signal peptide directing secretion. Residues G17–Q208 lie on the Extracellular side of the membrane. 2 consecutive Ig-like C2-type domains span residues P24–H105 and G107–T189. 2 cysteine pairs are disulfide-bonded: C47–C89 and C128–C172. N56, N63, and N82 each carry an N-linked (GlcNAc...) asparagine glycan. 2 N-linked (GlcNAc...) asparagine glycosylation sites follow: N180 and N187. Residues V209–M229 traverse the membrane as a helical segment. Over K230–K254 the chain is Cytoplasmic.

As to quaternary structure, forms a heterooligomeric complex with ITAM-containing signaling subunits, either a homodimer of CD247, a homodimer of FCER1G or a heterodimer of CD247 and FCER1G. Interacts (via transmembrane domain) with signaling subunits; this interaction is a prerequisite for receptor complex expression on the cell surface and intracellular signal transduction. Binds the Fc region of antigen-complexed IgG with a preference for IgG1 and IgG3 isotypes. Interacts with CD2; this interaction is involved in NK cell activation and cytotoxicity. Interacts with S100A4; this interaction inhibits PKC-dependent phosphorylation of FCGR3A. In terms of processing, glycosylated. Glycosylation plays an inhibitory role in the interaction with IgG1 and IgG2. Undergoes rapid ectodomain shedding upon NK cell stimulation. The soluble form is produced by a proteolytic cleavage mediated by ADAM17. Repeated stimulation causes receptor shedding, a mechanism that allows for increased NK cell motility and detachment from opsonized target cells while avoiding activation-induced NK cell apoptosis. In terms of tissue distribution, lymphocytes and monocytes.

Its subcellular location is the cell membrane. It is found in the secreted. In terms of biological role, receptor for the invariable Fc fragment of immunoglobulin gamma (IgG). Optimally activated upon binding of clustered antigen-IgG complexes displayed on cell surfaces, triggers lysis of antibody-coated cells, a process known as antibody-dependent cellular cytotoxicity (ADCC). Does not bind free monomeric IgG, thus avoiding inappropriate effector cell activation in the absence of antigenic trigger. Mediates IgG effector functions on natural killer (NK) cells. Binds antigen-IgG complexes generated upon infection and triggers NK cell-dependent cytokine production and degranulation to limit viral load and propagation. Involved in the generation of memory-like adaptive NK cells capable to produce high amounts of IFNG and to efficiently eliminate virus-infected cells via ADCC. Regulates NK cell survival and proliferation, in particular by preventing NK cell progenitor apoptosis. Fc-binding subunit that associates with CD247 and/or FCER1G adapters to form functional signaling complexes. Following the engagement of antigen-IgG complexes, triggers phosphorylation of immunoreceptor tyrosine-based activation motif (ITAM)-containing adapters with subsequent activation of phosphatidylinositol 3-kinase signaling and sustained elevation of intracellular calcium that ultimately drive NK cell activation. The ITAM-dependent signaling coupled to receptor phosphorylation by PKC mediates robust intracellular calcium flux that leads to production of pro-inflammatory cytokines, whereas in the absence of receptor phosphorylation it mainly activates phosphatidylinositol 3-kinase signaling leading to cell degranulation. Costimulates NK cells and trigger lysis of target cells independently of IgG binding. Mediates the antitumor activities of therapeutic antibodies. Upon ligation on monocytes triggers TNFA-dependent ADCC of IgG-coated tumor cells. Mediates enhanced ADCC in response to afucosylated IgGs. The chain is Low affinity immunoglobulin gamma Fc region receptor III-A (FCGR3A) from Macaca fascicularis (Crab-eating macaque).